A 70-amino-acid polypeptide reads, in one-letter code: DNA gyrase inhibitor YacG (70 aa).

C7, C10, C26, and C30 together coordinate Zn(2+).

It belongs to the DNA gyrase inhibitor YacG family. As to quaternary structure, interacts with GyrB. Zn(2+) is required as a cofactor.

Its function is as follows. Inhibits all the catalytic activities of DNA gyrase by preventing its interaction with DNA. Acts by binding directly to the C-terminal domain of GyrB, which probably disrupts DNA binding by the gyrase. This Shewanella woodyi (strain ATCC 51908 / MS32) protein is DNA gyrase inhibitor YacG.